Reading from the N-terminus, the 232-residue chain is Large ribosomal subunit protein uL1 (232 aa).

It belongs to the universal ribosomal protein uL1 family. In terms of assembly, part of the 50S ribosomal subunit.

In terms of biological role, binds directly to 23S rRNA. The L1 stalk is quite mobile in the ribosome, and is involved in E site tRNA release. Protein L1 is also a translational repressor protein, it controls the translation of the L11 operon by binding to its mRNA. The chain is Large ribosomal subunit protein uL1 from Burkholderia multivorans (strain ATCC 17616 / 249).